Consider the following 144-residue polypeptide: TSC22 domain family protein 1 (144 aa).

The segment at 77–98 (LKEQIKELIEKNSQLEQENNLL) is leucine-zipper. Residues 109–144 (QFQAQLQTGSPPATTQPQGTTQPPAQPASQGSGPTA) are disordered. Residues 115–144 (QTGSPPATTQPQGTTQPPAQPASQGSGPTA) are compositionally biased toward low complexity.

It belongs to the TSC-22/Dip/Bun family. In terms of assembly, forms homodimers. Forms a heterodimer with TSC22D4/THG1. Interacts with histone H1-2. Interacts with GNL3.

It localises to the cytoplasm. The protein localises to the nucleus. Transcriptional repressor. Plays a role in the repression of hematopoietic precursor cell growth. Promotes IL2 deprivation-induced apoptosis in T-lymphocytes, via repression of TSC22D3/GILZ transcription and activation of the caspase cascade. Positively regulates cell death in response to TGFB3 during mammary gland involution. The polypeptide is TSC22 domain family protein 1 (Bos taurus (Bovine)).